Consider the following 802-residue polypeptide: Leucine--tRNA ligase (802 aa).

The 'HIGH' region motif lies at 40-51 (PYPSGAGLHVGH). Residues 576–580 (KMSKS) carry the 'KMSKS' region motif. K579 provides a ligand contact to ATP.

Belongs to the class-I aminoacyl-tRNA synthetase family.

It is found in the cytoplasm. It carries out the reaction tRNA(Leu) + L-leucine + ATP = L-leucyl-tRNA(Leu) + AMP + diphosphate. In Bacillus anthracis (strain A0248), this protein is Leucine--tRNA ligase.